The primary structure comprises 363 residues: Flagellar P-ring protein 2 (363 aa).

Positions 1–20 are cleaved as a signal peptide; the sequence is MKRIVLLLMSVALFSTAAQA.

It belongs to the FlgI family. In terms of assembly, the basal body constitutes a major portion of the flagellar organelle and consists of four rings (L,P,S, and M) mounted on a central rod.

It localises to the periplasm. It is found in the bacterial flagellum basal body. In terms of biological role, assembles around the rod to form the L-ring and probably protects the motor/basal body from shearing forces during rotation. This chain is Flagellar P-ring protein 2 (flgI2), found in Vibrio parahaemolyticus serotype O3:K6 (strain RIMD 2210633).